A 216-amino-acid polypeptide reads, in one-letter code: MGTRDDEYDYLFKVVLIGDSGVGKSNLLSRFTRNEFNLESKSTIGVEFATRSIQVDGKTIKAQIWDTAGQERYRAITSAYYRGAVGALLVYDIAKHLTYENVERWLKELRDHADSNIVIMLVGNKSDLRHLRAVPTDEARAFAEKNGLSFIETSALDSTNVEAAFQTILTEIYRIVSQKQMSDRRENDMSPSNNVVPIHVPPTTENKPKVQCCQNI.

The residue at position 2 (G2) is an N-acetylglycine. GTP contacts are provided by S20, G21, V22, G23, K24, S25, N26, N37, L38, S40, S42, and T43. S25 contributes to the Mg(2+) binding site. The short motif at 36–47 is the Switch 1 element; sequence FNLESKSTIGVE. Positions 43 and 66 each coordinate Mg(2+). Positions 67-86 match the Switch 2 motif; that stretch reads TAGQERYRAITSAYYRGAVG. The GTP site is built by G69, N124, K125, D127, A155, and L156. A disordered region spans residues 183-211; it reads DRRENDMSPSNNVVPIHVPPTTENKPKVQ. Residues C212 and C213 are each lipidated (S-geranylgeranyl cysteine). C213 carries the cysteine methyl ester modification. The propeptide at 214 to 216 is removed in mature form; the sequence is QNI.

The protein belongs to the small GTPase superfamily. Rab family. As to quaternary structure, interacts (GTP-bound form) with RAB11FIPs (via their C-termini) including RAB11FIP1, RAB11FIP2, RAB11FIP3, RAB11FIP4 and RAB11FIP5 effectors. Forms a complex with RAB11FIP3 and dynein intermediate chain DYNC1LI1; the interaction between RAB11A1 and RAB11FIP3 is direct; the complex regulates endocytic trafficking. Interacts with EVI5; EVI5 and RAB11FIP3 may be mutually exclusive and compete for binding RAB11A. Interacts with SGSM1, SGSM2, SGSM3 and VIPAS39. Interacts with EXOC6 in a GTP-dependent manner. Interacts with RAB11FIP5. Interacts with STXBP6. Interacts (GDP-bound form) with ZFYVE27. Interacts with BIRC6/bruce. May interact with TBC1D14. Interacts with UNC119; in a cell cycle-dependent manner. GDP-bound and nucleotide-free forms interact with SH3BP5. Interacts (GDP-bound form) with KIF5A in a ZFYVE27-dependent manner. Interacts (GDP-bound form) with RELCH. Found in a complex composed of RELCH, OSBP1 and RAB11A. Interacts with TBC1D12. Interacts with DEF6. Interacts with ATP9A. Forms a heterotetramer with RAB11FIP3; the GTP-bound form is preferred for binding. Forms a complex with Rabin8/RAB3IP and RAB11FIP3, probably a heterohexamer with two of each protein subunit, where Rabin8/RAB3IP and RAB11FIP3 simultaneously bind to RAB11A; the complex promotes preciliary trafficking and cilia growth. Forms a complex containing RAB11A, ASAP1, Rabin8/RAB3IP, RAP11FIP3 and ARF4; the complex promotes preciliary trafficking; the complex binds to RHO in photoreceptor cells and promotes RHO ciliary transport. Interacts (GTP-bound form) with WDR44; the interaction prevents RAB11A-RAB3IP-RAB11FIP3 complex formation. The cofactor is Mg(2+). As to expression, detected in various tissues, such as brain, testis, spleen, and heart.

The protein resides in the cell membrane. The protein localises to the endosome membrane. Its subcellular location is the recycling endosome membrane. It is found in the cleavage furrow. It localises to the cytoplasmic vesicle. The protein resides in the phagosome. The protein localises to the cytoplasmic vesicle membrane. Its subcellular location is the golgi apparatus. It is found in the trans-Golgi network. It catalyses the reaction GTP + H2O = GDP + phosphate + H(+). Its activity is regulated as follows. Regulated by guanine nucleotide exchange factors (GEFs) which promote the exchange of bound GDP for free GTP. Regulated by GTPase activating proteins (GAPs) which increase the GTP hydrolysis activity. Inhibited by GDP dissociation inhibitors (GDIs) which prevent Rab-GDP dissociation. The small GTPases Rab are key regulators of intracellular membrane trafficking, from the formation of transport vesicles to their fusion with membranes. Rabs cycle between an inactive GDP-bound form and an active GTP-bound form that is able to recruit to membranes different set of downstream effectors directly responsible for vesicle formation, movement, tethering and fusion. The small Rab GTPase RAB11A regulates endocytic recycling. Forms a functional Rab11/RAB11FIP3/dynein complex that regulates the movement of peripheral sorting endosomes (SE) along microtubule tracks toward the microtubule organizing center/centrosome, generating the endosomal recycling compartment (ERC). Acts as a major regulator of membrane delivery during cytokinesis. Together with MYO5B and RAB8A participates in epithelial cell polarization. Together with Rabin8/RAB3IP, RAB8A, the exocyst complex, PARD3, PRKCI, ANXA2, CDC42 and DNMBP promotes transcytosis of PODXL to the apical membrane initiation sites (AMIS), apical surface formation and lumenogenesis. Together with MYO5B participates in CFTR trafficking to the plasma membrane and TF (Transferrin) recycling in nonpolarized cells. Required in a complex with MYO5B and RAB11FIP2 for the transport of NPC1L1 to the plasma membrane. Participates in the sorting and basolateral transport of CDH1 from the Golgi apparatus to the plasma membrane. Regulates the recycling of FCGRT (receptor of Fc region of monomeric IgG) to basolateral membranes. May also play a role in melanosome transport and release from melanocytes. Promotes Rabin8/RAB3IP preciliary vesicular trafficking to mother centriole by forming a ciliary targeting complex containing Rab11, ASAP1, Rabin8/RAB3IP, RAB11FIP3 and ARF4, thereby regulating ciliogenesis initiation. On the contrary, upon LPAR1 receptor signaling pathway activation, interaction with phosphorylated WDR44 prevents Rab11-RAB3IP-RAB11FIP3 complex formation and cilia growth. Participates in the export of a subset of neosynthesized proteins through a Rab8-Rab10-Rab11-endososomal dependent export route via interaction with WDR44. This Rattus norvegicus (Rat) protein is Ras-related protein Rab-11A.